We begin with the raw amino-acid sequence, 23 residues long: Acidic phospholipase A2 Ts-A2 (23 aa).

Ca(2+) is required as a cofactor. Contains 7 disulfide bonds. Expressed by the venom gland.

The protein resides in the secreted. It carries out the reaction a 1,2-diacyl-sn-glycero-3-phosphocholine + H2O = a 1-acyl-sn-glycero-3-phosphocholine + a fatty acid + H(+). In terms of biological role, exhibits moderate hydrolytic activities and prefers the anionic micelles (dPPC with deoxycholate) to the zwitterionic micelles (dPPC with Triton X-100). PLA2 catalyzes the calcium-dependent hydrolysis of the 2-acyl groups in 3-sn-phosphoglycerides. The polypeptide is Acidic phospholipase A2 Ts-A2 (Trimeresurus stejnegeri (Chinese green tree viper)).